The chain runs to 1978 residues: Sodium channel protein type 8 subunit alpha (1978 aa).

Disordered regions lie at residues 1 to 20 (MAARLLAPPGPDSFKPFTPE) and 28 to 62 (RIAESKLKKPPKADGSHREDDEDSKPKPNSDLEAG). At 1-132 (MAARLLAPPG…RIAIKILIHS (132 aa)) the chain is on the cytoplasmic side. A compositionally biased stretch (basic and acidic residues) spans 28 to 61 (RIAESKLKKPPKADGSHREDDEDSKPKPNSDLEA). One copy of the I repeat lies at 114 to 442 (ILSPFNLIRR…KAMLEQLKKQ (329 aa)). The helical transmembrane segment at 133 to 151 (VFSMIIMCTILTNCVFMTF) threads the bilayer. Residues 152–158 (SNPPEWS) are Extracellular-facing. Residues 159 to 179 (KNVEYTFTGIYTFESLVKIIA) traverse the membrane as a helical segment. The Cytoplasmic portion of the chain corresponds to 180-193 (RGFCIDGFTFLRDP). A helical transmembrane segment spans residues 194 to 211 (WNWLDFSVIMMAYVTEFV). At 212–217 (DLGNVS) the chain is on the extracellular side. Residue asparagine 215 is glycosylated (N-linked (GlcNAc...) asparagine). The chain crosses the membrane as a helical span at residues 218 to 234 (ALRTFRVLRALKTISVI). Residues 235-253 (PGLKTIVGALIQSVKKLSD) are Cytoplasmic-facing. A helical membrane pass occupies residues 254–273 (VMILTVFCLSVFALIGLQLF). The Extracellular segment spans residues 274 to 355 (MGNLRNKCVV…PNYGYTSFDT (82 aa)). Cysteines 281 and 333 form a disulfide. Residues asparagine 289, asparagine 295, asparagine 308, and asparagine 326 are each glycosylated (N-linked (GlcNAc...) asparagine). An intramembrane region (pore-forming) is located at residues 356 to 380 (FSWAFLALFRLMTQDYWENLYQLTL). Glutamate 373 is a binding site for Na(+). The Extracellular segment spans residues 381 to 387 (RAAGKTY). The helical transmembrane segment at 388–408 (MIFFVLVIFVGSFYLVNLILA) threads the bilayer. The Cytoplasmic segment spans residues 409–751 (VVAMAYEEQN…EIVNLIVMDP (343 aa)). Disordered regions lie at residues 446-530 (AQAA…KAFR) and 576-597 (DPGSENEFADDEHSTVEESEGR). The segment covering 473–486 (SPRSSSELSKLSSK) has biased composition (low complexity). Positions 489–500 (KERRNRRKKRKQ) are enriched in basic residues. Composition is skewed to basic and acidic residues over residues 501 to 530 (KELSEGEEKGDPEKVFKSESEDGMRRKAFR) and 586 to 597 (DEHSTVEESEGR). Serine 518 and serine 520 each carry phosphoserine. An II repeat occupies 733–1005 (CHPYWIKLKE…QISVIRIKKG (273 aa)). The chain crosses the membrane as a helical span at residues 752 to 770 (FVDLAITICIVLNTLFMAM). Residues 771-781 (EHHPMTPQFEH) lie on the Extracellular side of the membrane. A helical membrane pass occupies residues 782–801 (VLAVGNLVFTGIFTAEMFLK). The Cytoplasmic segment spans residues 802 to 815 (LIAMDPYYYFQEGW). Residues 816–835 (NIFDGFIVSLSLMELSLADV) traverse the membrane as a helical segment. Residues 836–837 (EG) are Extracellular-facing. The helical transmembrane segment at 838–855 (LSVLRSFRLLRVFKLAKS) threads the bilayer. The Cytoplasmic segment spans residues 856-871 (WPTLNMLIKIIGNSVG). The chain crosses the membrane as a helical span at residues 872–890 (ALGNLTLVLAIIVFIFAVV). The Extracellular segment spans residues 891 to 919 (GMQLFGKSYKECVCKINQECKLPRWHMND). Cysteines 904 and 910 form a disulfide. The segment at residues 920-940 (FFHSFLIVFRVLCGEWIETMW) is an intramembrane region (pore-forming). Na(+) is bound by residues glutamate 934 and glutamate 937. The Extracellular segment spans residues 941–953 (DCMEVAGQAMCLI). A disulfide bridge connects residues cysteine 942 and cysteine 951. A helical transmembrane segment spans residues 954 to 974 (VFMMVMVIGNLVVLNLFLALL). The Cytoplasmic portion of the chain corresponds to 975–1197 (LSSFSADNLA…TCFLIVEHNW (223 aa)). The segment at 1105–1146 (NLNTEDVSSESDPEGSKDKLDDTSSSEGSTIDIKPEVEEVPV) is disordered. One copy of the III repeat lies at 1178–1493 (LGKSWWILRK…KKYYNAMKKL (316 aa)). The helical transmembrane segment at 1198–1215 (FETFIIFMILLSSGALAF) threads the bilayer. Residues 1216 to 1228 (EDIYIEQRKTIRT) lie on the Extracellular side of the membrane. A helical membrane pass occupies residues 1229 to 1247 (ILEYADKVFTYIFILEMLL). Topologically, residues 1248–1261 (KWTAYGFVKFFTNA) are cytoplasmic. The helical transmembrane segment at 1262 to 1280 (WCWLDFLIVAVSLVSLIAN) threads the bilayer. At 1281–1288 (ALGYSELG) the chain is on the extracellular side. The chain crosses the membrane as a helical span at residues 1289 to 1307 (AIKSLRTLRALRPLRALSR). Residues 1308–1324 (FEGMRVVVNALVGAIPS) are Cytoplasmic-facing. A helical transmembrane segment spans residues 1325–1344 (IMNVLLVCLIFWLIFSIMGV). The Extracellular portion of the chain corresponds to 1345 to 1397 (NLFAGKYHYCFNETSEIRFEIDIVNNKTDCEKLMEGNSTEIRWKNVKINFDNV). Residues cysteine 1354 and cysteine 1374 are joined by a disulfide bond. N-linked (GlcNAc...) asparagine glycosylation is found at asparagine 1356, asparagine 1370, and asparagine 1381. The pore-forming intramembrane region spans 1398–1419 (GAGYLALLQVATFKGWMDIMYA). At 1420 to 1436 (AVDSRKPDEQPDYEGNI) the chain is on the extracellular side. The chain crosses the membrane as a helical span at residues 1437 to 1458 (YMYIYFVIFIIFGSFFTLNLFI). Residues 1459–1521 (GVIIDNFNQQ…IVFDFVTQQA (63 aa)) lie on the Cytoplasmic side of the membrane. Serine 1495 is subject to Phosphoserine; by PKC. The IV repeat unit spans residues 1502–1799 (IPRPLNKIQG…WEKFDPDATQ (298 aa)). A helical transmembrane segment spans residues 1522 to 1539 (FDIVIMMLICLNMVTMMV). Over 1540–1550 (ETDTQSKQMEN) the chain is Extracellular. Residues 1551 to 1569 (ILYWINLVFVIFFTCECVL) form a helical membrane-spanning segment. Residues 1570 to 1581 (KMFALRHYYFTI) lie on the Cytoplasmic side of the membrane. Residues 1582–1599 (GWNIFDFVVVILSIVGMF) traverse the membrane as a helical segment. Residues 1600 to 1612 (LADIIEKYFVSPT) lie on the Extracellular side of the membrane. Residues 1613–1629 (LFRVIRLARIGRILRLI) form a helical membrane-spanning segment. Over 1630 to 1648 (KGAKGIRTLLFALMMSLPA) the chain is Cytoplasmic. The chain crosses the membrane as a helical span at residues 1649 to 1666 (LFNIGLLLFLVMFIFSIF). Over 1667-1688 (GMSNFAYVKHEAGIDDMFNFET) the chain is Extracellular. An intramembrane region (pore-forming) is located at residues 1689-1711 (FGNSMICLFQITTSAGWDGLLLP). Topologically, residues 1712–1740 (ILNRPPDCSLDKEHPGSGFKGDCGNPSVG) are extracellular. An intrachain disulfide couples cysteine 1719 to cysteine 1734. The helical transmembrane segment at 1741–1763 (IFFFVSYIIISFLIVVNMYIAII) threads the bilayer. Residues 1764–1978 (LENFSVATEE…RQKEVRESKC (215 aa)) are Cytoplasmic-facing. In terms of domain architecture, IQ spans 1893 to 1922 (EEVSAVVLQRAYRGHLARRGFICRKMASNK). Positions 1923-1978 (LENGGTHRDKKESTPSTASLPSYDSVTKPDKEKQQRAEEGRRERAKRQKEVRESKC) are disordered. A compositionally biased stretch (polar residues) spans 1936–1947 (TPSTASLPSYDS). Basic and acidic residues predominate over residues 1949–1978 (TKPDKEKQQRAEEGRRERAKRQKEVRESKC).

The protein belongs to the sodium channel (TC 1.A.1.10) family. Nav1.6/SCN8A subfamily. In terms of assembly, the voltage-sensitive sodium channel consists of an ion-conducting pore-forming alpha subunit regulated by one or more beta-1 (SCN1B), beta-2 (SCN2B), beta-3 (SCN3B) and/or beta-4 (SCN4B) subunits. Beta-1 (SCN1B) and beta-3 (SCN3B) are non-covalently associated with alpha, while beta-2 (SCN2B) and beta-4 (SCN4B) are covalently linked by disulfide bonds. Interacts with NEDD4 and NEDD4L. Interacts with FGF13. Interacts with FGF14, GBG3, GBB2 and SCN1B. Interacts with TMEM233. Interacts with the conotoxin GVIIJ. Interacts with CALM1; the interaction modulates the inactivation rate of SCN8A. Post-translationally, may be ubiquitinated by NEDD4L; which would promote its endocytosis. In terms of processing, phosphorylation at Ser-1495 by PKC in a highly conserved cytoplasmic loop slows inactivation of the sodium channel and reduces peak sodium currents. As to expression, isoform 1 is highly expressed in brain, moderately in spinal cord, and at low levels in dorsal root ganglia, nodose ganglia and superior cervical ganglia. Not detected in sciatic nerve and non-neuronal tissues. Isoform 2 is hardly detectable, if at all, in brain, expressed at low levels in spinal cord and at highest levels in dorsal root ganglia.

The protein resides in the cell membrane. It is found in the cell projection. Its subcellular location is the axon. The catalysed reaction is Na(+)(in) = Na(+)(out). In terms of biological role, pore-forming subunit of a voltage-gated sodium channel complex assuming opened or closed conformations in response to the voltage difference across membranes and through which sodium ions selectively pass along their electrochemical gradient. Contributes to neuronal excitability by regulating action potential threshold and propagation. The protein is Sodium channel protein type 8 subunit alpha of Rattus norvegicus (Rat).